We begin with the raw amino-acid sequence, 299 residues long: Protein translocase subunit SecF (299 aa).

6 helical membrane passes run 14 to 34 (VLIV…FYHG), 142 to 162 (IFLV…RFKL), 166 to 186 (IASI…LGVF), 193 to 213 (YIIV…IIIF), 245 to 265 (LTSV…EGSI), and 270 to 290 (LVFM…ASPI).

This sequence belongs to the SecD/SecF family. SecF subfamily. Forms a complex with SecD. Part of the essential Sec protein translocation apparatus which comprises SecA, SecYEG and auxiliary proteins SecDF. Other proteins may also be involved.

It localises to the cell inner membrane. In terms of biological role, part of the Sec protein translocase complex. Interacts with the SecYEG preprotein conducting channel. SecDF uses the proton motive force (PMF) to complete protein translocation after the ATP-dependent function of SecA. This is Protein translocase subunit SecF from Borreliella burgdorferi (strain ATCC 35210 / DSM 4680 / CIP 102532 / B31) (Borrelia burgdorferi).